A 122-amino-acid polypeptide reads, in one-letter code: Small ribosomal subunit protein uS13 (122 aa).

The segment at 93-122 is disordered; the sequence is RRGLPVRGQRTKTNARTRKGPKKTIAGKKK.

The protein belongs to the universal ribosomal protein uS13 family. In terms of assembly, part of the 30S ribosomal subunit. Forms a loose heterodimer with protein S19. Forms two bridges to the 50S subunit in the 70S ribosome.

Located at the top of the head of the 30S subunit, it contacts several helices of the 16S rRNA. In the 70S ribosome it contacts the 23S rRNA (bridge B1a) and protein L5 of the 50S subunit (bridge B1b), connecting the 2 subunits; these bridges are implicated in subunit movement. Contacts the tRNAs in the A and P-sites. The polypeptide is Small ribosomal subunit protein uS13 (Corynebacterium urealyticum (strain ATCC 43042 / DSM 7109)).